The following is a 138-amino-acid chain: Large ribosomal subunit protein uL16 (138 aa).

It belongs to the universal ribosomal protein uL16 family. Part of the 50S ribosomal subunit.

In terms of biological role, binds 23S rRNA and is also seen to make contacts with the A and possibly P site tRNAs. The polypeptide is Large ribosomal subunit protein uL16 (Chlamydia pneumoniae (Chlamydophila pneumoniae)).